A 680-amino-acid polypeptide reads, in one-letter code: Dihydroxyacetone phosphate acyltransferase (680 aa).

Phosphoserine is present on residues Ser-12 and Ser-17. Residues 162–167 (HRSYID) carry the HXXXXD motif motif. Lys-643 carries the N6-acetyllysine modification. Positions 678 to 680 (AKL) match the Microbody targeting signal motif.

The protein belongs to the GPAT/DAPAT family. Part of a heterotrimeric complex composed of GNPAT, AGPS and a modified form of GNPAT.

It localises to the peroxisome membrane. The enzyme catalyses dihydroxyacetone phosphate + an acyl-CoA = a 1-acylglycerone 3-phosphate + CoA. The catalysed reaction is dihydroxyacetone phosphate + hexadecanoyl-CoA = 1-hexadecanoylglycerone 3-phosphate + CoA. Its pathway is membrane lipid metabolism; glycerophospholipid metabolism. Dihydroxyacetonephosphate acyltransferase catalyzing the first step in the biosynthesis of plasmalogens, a subset of phospholipids that differ from other glycerolipids by having an alkyl chain attached through a vinyl ether linkage at the sn-1 position of the glycerol backbone, and which unique physical properties have an impact on various aspects of cell signaling and membrane biology. This is Dihydroxyacetone phosphate acyltransferase from Homo sapiens (Human).